Consider the following 227-residue polypeptide: Cytidylate kinase (227 aa).

12-20 (GPSGAGKGT) contacts ATP.

This sequence belongs to the cytidylate kinase family. Type 1 subfamily.

Its subcellular location is the cytoplasm. It catalyses the reaction CMP + ATP = CDP + ADP. The enzyme catalyses dCMP + ATP = dCDP + ADP. The protein is Cytidylate kinase of Shigella flexneri.